The following is a 386-amino-acid chain: GTPase Obg (386 aa).

An Obg domain is found at 4-162 (SNFVDYVKIY…MTVILELKLL (159 aa)). Positions 18–45 (KGGRGSTHMRREKYTPNGGPDGGDGGRG) are disordered. Positions 36–45 (GPDGGDGGRG) are enriched in gly residues. Residues 163-329 (ADVGLVGFPN…LKDILWTELN (167 aa)) form the OBG-type G domain. GTP contacts are provided by residues 169–176 (GFPNAGKS), 194–198 (FTTLE), 216–219 (DIPG), 283–286 (TKSD), and 310–312 (SSV). Residues Ser176 and Thr196 each coordinate Mg(2+). The segment at 351–386 (ELKDMGEDEELDYEYEDDGDEDDLDYEYEEEDWEDK) is disordered. Residues 356–386 (GEDEELDYEYEDDGDEDDLDYEYEEEDWEDK) show a composition bias toward acidic residues.

The protein belongs to the TRAFAC class OBG-HflX-like GTPase superfamily. OBG GTPase family. As to quaternary structure, monomer. The cofactor is Mg(2+).

It is found in the cytoplasm. Its function is as follows. An essential GTPase which binds GTP, GDP and possibly (p)ppGpp with moderate affinity, with high nucleotide exchange rates and a fairly low GTP hydrolysis rate. Plays a role in control of the cell cycle, stress response, ribosome biogenesis and in those bacteria that undergo differentiation, in morphogenesis control. In Bacteroides fragilis (strain YCH46), this protein is GTPase Obg.